A 585-amino-acid chain; its full sequence is Ras-specific guanine nucleotide-releasing factor RalGPS1 (585 aa).

A Ras-GEF domain is found at 50 to 289 (TPEEFASQIT…YKLSLRIEPG (240 aa)). Disordered stretches follow at residues 289-342 (GSSS…KSHS) and 378-410 (RSPR…SEEM). A compositionally biased stretch (low complexity) spans 303 to 312 (AGPSAGSSSA). The PXXP signature appears at 330–333 (PTPP). Residues 385–396 (THTSSTAITNGL) are compositionally biased toward polar residues. Residues 459–571 (VPTMEGPLRR…WHKHLDDACK (113 aa)) form the PH domain. Residues 461–585 (TMEGPLRRKT…QVPANLMSFE (125 aa)) form a required for stimulation of nucleotide exchange by RALA region.

As to quaternary structure, interacts with the SH3 domains of GRB2, NCK1, PLCG1 and SRC.

The protein localises to the cytoplasm. The protein resides in the cell membrane. In terms of biological role, guanine nucleotide exchange factor for the small GTPase RALA. May be involved in cytoskeleton organization. This Mus musculus (Mouse) protein is Ras-specific guanine nucleotide-releasing factor RalGPS1 (Ralgps1).